We begin with the raw amino-acid sequence, 465 residues long: Putative multidrug resistance protein MdtD (465 aa).

The next 13 helical transmembrane spans lie at 12–32 (LWIVAFGFFMQTLDTTIVNTA), 49–69 (SVIVSYVLTVAVMLPASGWLA), 72–92 (IGVKWVFFSAIILFTFGSLMC), 102–124 (ILSRVLQGVGGAMMVPVGRLTVM), 138–158 (FVTLPGQIGPLVGPALGGFLV), 165–185 (WIFLINLPVGVIGALATLLLM), 195–215 (FDISGFIMLAIGMATLTLALD), 219–239 (GLGLSPLAIAGLILCGVIALG), 267–287 (LVGSMSARIGSGMLPFMTPIF), 290–310 (IGLGFSPFHAGLMMIPMIIGS), 342–362 (LSLPLVAIMGWTLLMPVVLFF), 393–413 (LLSMAMQLSMSIGVSTAGILL), and 430–450 (SAFLYSYLCMAIIIALPALIF).

This sequence belongs to the major facilitator superfamily. TCR/Tet family.

Its subcellular location is the cell inner membrane. The sequence is that of Putative multidrug resistance protein MdtD from Yersinia pseudotuberculosis serotype O:1b (strain IP 31758).